A 132-amino-acid polypeptide reads, in one-letter code: Large ribosomal subunit protein bL12 (132 aa).

The interval 112–132 (KEAADKAKTQLEGAGGTINLK) is disordered.

Belongs to the bacterial ribosomal protein bL12 family. As to quaternary structure, homodimer. Part of the ribosomal stalk of the 50S ribosomal subunit. Forms a multimeric L10(L12)X complex, where L10 forms an elongated spine to which 2 to 4 L12 dimers bind in a sequential fashion. Binds GTP-bound translation factors.

Functionally, forms part of the ribosomal stalk which helps the ribosome interact with GTP-bound translation factors. Is thus essential for accurate translation. In Leifsonia xyli subsp. xyli (strain CTCB07), this protein is Large ribosomal subunit protein bL12.